We begin with the raw amino-acid sequence, 292 residues long: Cytidine deaminase (292 aa).

CMP/dCMP-type deaminase domains lie at 47–167 (TPLK…FGPK) and 186–292 (DHQD…YYSL). 88 to 90 (NQE) is a binding site for substrate. His101 contacts Zn(2+). Catalysis depends on Glu103, which acts as the Proton donor. The Zn(2+) site is built by Cys128 and Cys131.

It belongs to the cytidine and deoxycytidylate deaminase family. As to quaternary structure, homodimer. Zn(2+) serves as cofactor.

It catalyses the reaction cytidine + H2O + H(+) = uridine + NH4(+). The catalysed reaction is 2'-deoxycytidine + H2O + H(+) = 2'-deoxyuridine + NH4(+). This enzyme scavenges exogenous and endogenous cytidine and 2'-deoxycytidine for UMP synthesis. The sequence is that of Cytidine deaminase from Haemophilus influenzae (strain 86-028NP).